A 207-amino-acid polypeptide reads, in one-letter code: Probable HTH-type transcriptional regulator YttP (207 aa).

Residues 3–63 (VSTKDKIIES…HLVSEFYEGY (61 aa)) form the HTH tetR-type domain. Residues 26–45 (SVREIAKSADVNVAHISYYF) constitute a DNA-binding region (H-T-H motif).

In Bacillus subtilis (strain 168), this protein is Probable HTH-type transcriptional regulator YttP (yttP).